The sequence spans 411 residues: DNA polymerase IV (411 aa).

The region spanning 18–211 (VVHVDMDCFY…LDVADLHGVG (194 aa)) is the UmuC domain. The Mg(2+) site is built by aspartate 22 and aspartate 130. The active site involves glutamate 131. Disordered regions lie at residues 248 to 280 (FHRRARGADSRPVEPRGKPKSLSRESSFDGATE) and 376 to 411 (GFSGDETGDGGGHEGGACGGAGRGSCGGQTTLDEFT). The segment covering 253–274 (RGADSRPVEPRGKPKSLSRESS) has biased composition (basic and acidic residues). A compositionally biased stretch (gly residues) spans 384–402 (DGGGHEGGACGGAGRGSCG).

The protein belongs to the DNA polymerase type-Y family. In terms of assembly, monomer. Requires Mg(2+) as cofactor.

It localises to the cytoplasm. It catalyses the reaction DNA(n) + a 2'-deoxyribonucleoside 5'-triphosphate = DNA(n+1) + diphosphate. In terms of biological role, poorly processive, error-prone DNA polymerase involved in untargeted mutagenesis. Copies undamaged DNA at stalled replication forks, which arise in vivo from mismatched or misaligned primer ends. These misaligned primers can be extended by PolIV. Exhibits no 3'-5' exonuclease (proofreading) activity. May be involved in translesional synthesis. This chain is DNA polymerase IV, found in Halobacterium salinarum (strain ATCC 29341 / DSM 671 / R1).